The following is a 311-amino-acid chain: Mediator of RNA polymerase II transcription subunit 27-A (311 aa).

This sequence belongs to the Mediator complex subunit 27 family. In terms of assembly, component of the Mediator complex.

The protein resides in the nucleus. In terms of biological role, component of the Mediator complex, a coactivator involved in the regulated transcription of nearly all RNA polymerase II-dependent genes. Mediator functions as a bridge to convey information from gene-specific regulatory proteins to the basal RNA polymerase II transcription machinery. Mediator is recruited to promoters by direct interactions with regulatory proteins and serves as a scaffold for the assembly of a functional preinitiation complex with RNA polymerase II and the general transcription factors. In Xenopus laevis (African clawed frog), this protein is Mediator of RNA polymerase II transcription subunit 27-A (med27-a).